The primary structure comprises 677 residues: Glutamine--fructose-6-phosphate aminotransferase [isomerizing] 1 (677 aa).

The active-site Nucleophile is the Cys2. A Glutamine amidotransferase type-2 domain is found at Cys2–Gly269. 2 consecutive SIS domains span residues His353–Ser492 and Leu524–Pro667. Substrate-binding positions include Thr370 to Ser371, Ser415 to Ser417, Thr420, and His571.

In terms of assembly, homotetramer, may also exist as homodimers. Highly expressed in flowers specifically in mature anthers, mature pollen grains and pollen tubes. Barely observed in roots, leaves and stems.

The catalysed reaction is D-fructose 6-phosphate + L-glutamine = D-glucosamine 6-phosphate + L-glutamate. The protein operates within nucleotide-sugar biosynthesis; UDP-N-acetyl-alpha-D-glucosamine biosynthesis; alpha-D-glucosamine 6-phosphate from D-fructose 6-phosphate: step 1/1. Functionally, controls the flux of glucose into the hexosamine biosynthetic pathway (HBP) leading to glucosamine (GlcN) content homeostasis. Involved in regulating the availability of precursors for N- and O-linked glycosylation of proteins. Required during pollen maturation and pollen tube formation by triggering polar deposition of pectin and callose in the pollen cell wall. Promotes tolerance to tunicamycin (Tm), an inhibitor of proteins N-glycosylation in endoplasmic reticulum (ER). The protein is Glutamine--fructose-6-phosphate aminotransferase [isomerizing] 1 of Arabidopsis thaliana (Mouse-ear cress).